The chain runs to 151 residues: Large-conductance mechanosensitive channel (151 aa).

Helical transmembrane passes span 14–34 (VVDMAVGIIVGGAFGTIVNTL), 38–58 (VLMPPLGLLIGGVDFTNLYLI), and 86–106 (GLFLNSVISFLIMAFAVFLLV).

Belongs to the MscL family. As to quaternary structure, homopentamer.

The protein localises to the cell inner membrane. Functionally, channel that opens in response to stretch forces in the membrane lipid bilayer. May participate in the regulation of osmotic pressure changes within the cell. This Pelodictyon phaeoclathratiforme (strain DSM 5477 / BU-1) protein is Large-conductance mechanosensitive channel.